The sequence spans 603 residues: Sabinene hydrate synthase, chloroplastic (603 aa).

Residues Met1 to Arg47 constitute a chloroplast transit peptide. Mn(2+)-binding residues include Asp357 and Asp361. The short motif at Asp357–Asp361 is the DDXXD motif element. 2 homodimerization regions span residues Tyr363 to Leu369 and Glu435 to Pro472. Positions 501 and 509 each coordinate Mn(2+).

The protein belongs to the terpene synthase family. Homodimer. It depends on Mn(2+) as a cofactor. The cofactor is Mg(2+).

Its subcellular location is the plastid. The protein localises to the chloroplast. It catalyses the reaction (2E)-geranyl diphosphate + H2O = sabinene hydrate + diphosphate. The protein operates within secondary metabolite biosynthesis; terpenoid biosynthesis. Its function is as follows. Involved in the biosynthesis of phenolic monoterpenes natural products. Monoterpene synthase which catalyzes the conversion of geranyl diphosphate (GPP) to sabinene hydrate, mainly (Z)-sabinene hydrate and to a lower extent (E)-sabinene hydrate, and the formation of minor amounts and traces of several other monoterpenes (e.g. mainly alpha-thujene, alpha-pinene and myrcene). The sequence is that of Sabinene hydrate synthase, chloroplastic from Thymus vulgaris (Thyme).